A 460-amino-acid polypeptide reads, in one-letter code: Bifunctional protein GlmU (460 aa).

The pyrophosphorylase stretch occupies residues 1–230; that stretch reads MSNNYAIILA…FDESLGVNDR (230 aa). Residues 9 to 12, Lys23, Gln73, and 78 to 79 each bind UDP-N-acetyl-alpha-D-glucosamine; these read LAAG and GT. A Mg(2+)-binding site is contributed by Asp103. Residues Gly140, Glu155, Asn170, and Asn228 each coordinate UDP-N-acetyl-alpha-D-glucosamine. Position 228 (Asn228) interacts with Mg(2+). The segment at 231–251 is linker; it reads VALATAEAVMRKRINEKHMVN. The N-acetyltransferase stretch occupies residues 252–460; that stretch reads GVTFINPDAT…TRFPFHPSQK (209 aa). Arg333 and Lys351 together coordinate UDP-N-acetyl-alpha-D-glucosamine. His363 serves as the catalytic Proton acceptor. Tyr366 and Asn377 together coordinate UDP-N-acetyl-alpha-D-glucosamine. Acetyl-CoA contacts are provided by residues Ala380, 386 to 387, Ser405, Ala423, and Arg440; that span reads NY.

In the N-terminal section; belongs to the N-acetylglucosamine-1-phosphate uridyltransferase family. It in the C-terminal section; belongs to the transferase hexapeptide repeat family. Homotrimer. It depends on Mg(2+) as a cofactor.

The protein resides in the cytoplasm. The enzyme catalyses alpha-D-glucosamine 1-phosphate + acetyl-CoA = N-acetyl-alpha-D-glucosamine 1-phosphate + CoA + H(+). The catalysed reaction is N-acetyl-alpha-D-glucosamine 1-phosphate + UTP + H(+) = UDP-N-acetyl-alpha-D-glucosamine + diphosphate. It functions in the pathway nucleotide-sugar biosynthesis; UDP-N-acetyl-alpha-D-glucosamine biosynthesis; N-acetyl-alpha-D-glucosamine 1-phosphate from alpha-D-glucosamine 6-phosphate (route II): step 2/2. It participates in nucleotide-sugar biosynthesis; UDP-N-acetyl-alpha-D-glucosamine biosynthesis; UDP-N-acetyl-alpha-D-glucosamine from N-acetyl-alpha-D-glucosamine 1-phosphate: step 1/1. The protein operates within bacterial outer membrane biogenesis; LPS lipid A biosynthesis. Catalyzes the last two sequential reactions in the de novo biosynthetic pathway for UDP-N-acetylglucosamine (UDP-GlcNAc). The C-terminal domain catalyzes the transfer of acetyl group from acetyl coenzyme A to glucosamine-1-phosphate (GlcN-1-P) to produce N-acetylglucosamine-1-phosphate (GlcNAc-1-P), which is converted into UDP-GlcNAc by the transfer of uridine 5-monophosphate (from uridine 5-triphosphate), a reaction catalyzed by the N-terminal domain. The protein is Bifunctional protein GlmU of Streptococcus suis (strain 98HAH33).